A 333-amino-acid chain; its full sequence is Transcription factor MYB94 (333 aa).

HTH myb-type domains follow at residues 9-65 (KIGV…RPGI) and 66-116 (KRGN…KKKL). 2 consecutive DNA-binding regions (H-T-H motif) follow at residues 37-61 (WRSV…TNYL) and 89-112 (WAAI…NTHL). The segment covering 134 to 154 (KDFSISNKNTTSHQSSNSSKG) has biased composition (polar residues). 2 disordered regions span residues 134–157 (KDFS…GQWE) and 183–218 (PTNF…YPSG). Residues 196-209 (SSSSSSTTTTTTTT) show a composition bias toward low complexity.

Expressed in germinating seeds, rosette and cauline leaves, flower buds, open flowers, stems and developing siliques.

The protein localises to the nucleus. In terms of biological role, transcription activator involved in the activation of cuticular wax biosynthesis under drought stress. Binds directly to the promoters of genes involved in cuticular wax biosynthesis. Transactivates WSD1, KCS2/DAISY, CER1, CER2, FAR3 and ECR genes. Functions together with MYB96 in the activation of cuticular wax biosynthesis. This chain is Transcription factor MYB94, found in Arabidopsis thaliana (Mouse-ear cress).